The chain runs to 900 residues: Bifunctional uridylyltransferase/uridylyl-removing enzyme (900 aa).

The uridylyltransferase stretch occupies residues 1 to 342 (MPQVDPELFD…PCEQPVQIQP (342 aa)). The uridylyl-removing stretch occupies residues 343-705 (LNSRFQLRDG…TTQREFESGS (363 aa)). The HD domain maps to 461-583 (VDAHTLNLIK…VGDQTHLDYL (123 aa)). ACT domains lie at 706 to 789 (QIFI…IIQR) and 816 to 891 (VLEV…DNGR).

This sequence belongs to the GlnD family. The cofactor is Mg(2+).

The enzyme catalyses [protein-PII]-L-tyrosine + UTP = [protein-PII]-uridylyl-L-tyrosine + diphosphate. The catalysed reaction is [protein-PII]-uridylyl-L-tyrosine + H2O = [protein-PII]-L-tyrosine + UMP + H(+). Its activity is regulated as follows. Uridylyltransferase (UTase) activity is inhibited by glutamine, while glutamine activates uridylyl-removing (UR) activity. Modifies, by uridylylation and deuridylylation, the PII regulatory proteins (GlnB and homologs), in response to the nitrogen status of the cell that GlnD senses through the glutamine level. Under low glutamine levels, catalyzes the conversion of the PII proteins and UTP to PII-UMP and PPi, while under higher glutamine levels, GlnD hydrolyzes PII-UMP to PII and UMP (deuridylylation). Thus, controls uridylylation state and activity of the PII proteins, and plays an important role in the regulation of nitrogen assimilation and metabolism. This Pseudomonas aeruginosa (strain LESB58) protein is Bifunctional uridylyltransferase/uridylyl-removing enzyme.